Reading from the N-terminus, the 142-residue chain is MKTYIPKDEDINREWFVVDAENMVLGRLATQIANKLRGKDKAMFTPHVDTGDFVVVLNADKIKVTGNKMDQKTYYKHTNHPGGLKERTLKVMLEKKPEVVIETAVRGMLPKNRLGKQMIKKLKVYAGTEHPHTAQQPKVLEF.

The protein belongs to the universal ribosomal protein uL13 family. As to quaternary structure, part of the 50S ribosomal subunit.

This protein is one of the early assembly proteins of the 50S ribosomal subunit, although it is not seen to bind rRNA by itself. It is important during the early stages of 50S assembly. The sequence is that of Large ribosomal subunit protein uL13 from Maridesulfovibrio salexigens (strain ATCC 14822 / DSM 2638 / NCIMB 8403 / VKM B-1763) (Desulfovibrio salexigens).